Consider the following 542-residue polypeptide: GATA-type transcription factor sreA (542 aa).

The segment covering 1–10 (MLTLRSSSDT) has biased composition (polar residues). Residues 1–172 (MLTLRSSSDT…SAQNASGCGS (172 aa)) are disordered. The span at 44-63 (ADLRPDSFDASRSPDGDKAS) shows a compositional bias: basic and acidic residues. 2 stretches are compositionally biased toward low complexity: residues 75–117 (SSDQ…PKAS) and 148–168 (SSTSDPRASPAASDASAQNAS). The segment at 178–196 (CPGGGSCNGTGGAVGCDGC) is cystein-rich region (CRR). Over residues 210–223 (APSARQARASPSAQ) the composition is skewed to low complexity. Residues 210-248 (APSARQARASPSAQTSEEQAQSGLDALDSASQDASGMPK) are disordered. Residues 250 to 274 (CQNCGTTLTPLWRRDDQGNTICNAC) form a GATA-type zinc finger. The span at 289 to 300 (MKKTVIKRRKRV) shows a compositional bias: basic residues. Disordered regions lie at residues 289–408 (MKKT…PATR) and 461–525 (SNAP…REAE). 2 stretches are compositionally biased toward polar residues: residues 311 to 320 (AGSSDNSSVS) and 369 to 387 (KPTQSTSSPGLNTLINHSP). Over residues 396-407 (ESTSAESAPPAT) the composition is skewed to low complexity. The span at 464 to 483 (PARSQTQTQPQPGTRSYSPN) shows a compositional bias: polar residues. Residues 510 to 542 (DKVKAARRAQLQREAENMREALRAKERELASLK) are a coiled coil.

It is found in the nucleus. In terms of biological role, GATA-type transcription repressor that regulates iron acquisition genes through specific binding the GATA sequence elements of target promoters. SreA targets include genes encoding a number of key iron-regulated factors such as the siderophore biosynthesis genes. Is dispensable for growth on keratin substrates. SreA represses the expression of hapX and the siderophore system during iron sufficient conditions by an iron-sensing mechanism, while hapX represses sreA and activates the siderophore system during iron-limiting conditions resulting in efficient iron uptake and inhibition of iron-consuming pathways. This Arthroderma benhamiae (strain ATCC MYA-4681 / CBS 112371) (Trichophyton mentagrophytes) protein is GATA-type transcription factor sreA.